The primary structure comprises 58 residues: Apelin receptor early endogenous ligand (58 aa).

Residues 1–22 form the signal peptide; that stretch reads MRFFHPLYLLLLLLTVLVLISA.

The protein belongs to the Elabela/Toddler family. Interacts with aplnra and aplnrb. As to expression, expressed ubiquitously during late blastula and gastrula stages and becomes restricted to the lateral mesoderm, endoderm, and anterior and posterior notochord after gastrulation.

The protein localises to the secreted. It is found in the extracellular space. Peptide hormone that functions as endogenous ligand for the G-protein-coupled apelin receptor (aplnra and/or aplnrb), that plays a role in the regulation of normal cardiovascular function and fluid homeostasis. Functions as a balanced agonist activating both G(i) protein pathway and beta-arrestin pathway of APLNR. Downstream G proteins activation, apelin can inhibit cAMP production and activate key intracellular effectors such as ERKs. On the other hand, APLNR activation induces beta-arrestin recruitment to the membrane leading to desensitization and internalization of the receptor. Required for mesendodermal differentiation, blood vessels formation and heart morphogenesis during early development and for adult cardiovascular homeostasis. Acts as a motogen by promoting mesendodermal cell migration during gastrulation by binding and activating the apelin receptor. Acts as an early embryonic regulator of cellular movement with a role in migration and development of cardiac progenitor cells. May act as a chemoattractant for the activation of angioblast migration toward the embryonic midline, i.e. the position of the future vessel formation, during vasculogenesis. Positively regulates sinus venosus (SV)-derived endothelial cells migration into the developing heart to promote coronary blood vessel sprouting. Involved in cardioprotective functions during heart failure. Mediates myocardial contractility in an ERK1/2-dependent manner. This is Apelin receptor early endogenous ligand from Danio rerio (Zebrafish).